The following is a 361-amino-acid chain: NADP-dependent alcohol dehydrogenase 7 (361 aa).

Cys-46 is a binding site for Zn(2+). The NADP(+) site is built by Gly-47 and His-51. Zn(2+) contacts are provided by His-68, Cys-100, Cys-103, Cys-106, Cys-114, and Cys-164. Positions 189, 191, 192, 211, 212, 216, 251, 253, 256, 276, 300, and 302 each coordinate NADP(+). Ser-316 bears the Phosphoserine mark. Residue Arg-349 participates in NADP(+) binding.

Belongs to the zinc-containing alcohol dehydrogenase family. In terms of assembly, homodimer. The cofactor is Zn(2+).

It carries out the reaction a primary alcohol + NADP(+) = an aldehyde + NADPH + H(+). The catalysed reaction is (E)-cinnamyl alcohol + NADP(+) = (E)-cinnamaldehyde + NADPH + H(+). The enzyme catalyses 3-methylbutanol + NADP(+) = 3-methylbutanal + NADPH + H(+). In terms of biological role, NADP-dependent alcohol dehydrogenase with a broad substrate specificity. The oxidative reactions are more than 100 times less efficient than the corresponding reductions, suggesting that the enzyme acts as an aldehyde reductase, rather than as an alcohol dehydrogenase. This chain is NADP-dependent alcohol dehydrogenase 7 (ADH7), found in Saccharomyces cerevisiae (strain ATCC 204508 / S288c) (Baker's yeast).